Here is a 100-residue protein sequence, read N- to C-terminus: Large ribosomal subunit protein bL21 (100 aa).

This sequence belongs to the bacterial ribosomal protein bL21 family. In terms of assembly, part of the 50S ribosomal subunit. Contacts protein L20.

Functionally, this protein binds to 23S rRNA in the presence of protein L20. This Corynebacterium kroppenstedtii (strain DSM 44385 / JCM 11950 / CIP 105744 / CCUG 35717) protein is Large ribosomal subunit protein bL21.